The following is a 445-amino-acid chain: tRNA-2-methylthio-N(6)-dimethylallyladenosine synthase (445 aa).

One can recognise an MTTase N-terminal domain in the interval 2–119 (KKLYIRTFGC…LPQLIAERRH (118 aa)). Cys-11, Cys-48, Cys-82, Cys-156, Cys-160, and Cys-163 together coordinate [4Fe-4S] cluster. Residues 142-378 (RVEGASAFVS…RIDQQAQAIS (237 aa)) enclose the Radical SAM core domain. The TRAM domain occupies 379–442 (QAMVGRVERA…PHSLRGEIVT (64 aa)).

The protein belongs to the methylthiotransferase family. MiaB subfamily. As to quaternary structure, monomer. Requires [4Fe-4S] cluster as cofactor.

The protein resides in the cytoplasm. It carries out the reaction N(6)-dimethylallyladenosine(37) in tRNA + (sulfur carrier)-SH + AH2 + 2 S-adenosyl-L-methionine = 2-methylsulfanyl-N(6)-dimethylallyladenosine(37) in tRNA + (sulfur carrier)-H + 5'-deoxyadenosine + L-methionine + A + S-adenosyl-L-homocysteine + 2 H(+). Its function is as follows. Catalyzes the methylthiolation of N6-(dimethylallyl)adenosine (i(6)A), leading to the formation of 2-methylthio-N6-(dimethylallyl)adenosine (ms(2)i(6)A) at position 37 in tRNAs that read codons beginning with uridine. This chain is tRNA-2-methylthio-N(6)-dimethylallyladenosine synthase, found in Aromatoleum aromaticum (strain DSM 19018 / LMG 30748 / EbN1) (Azoarcus sp. (strain EbN1)).